Consider the following 423-residue polypeptide: MLRVRCLRGGSRGAEAVHYIGSRLGGSLTGWVQRTFQSTQAATASSRNSCAAEDKATHPLPKDCPVSSYNEWDPLEEVIVGRAENACVPPFTVEVKANTYEKYWPFYQKNGGLYFPKDHLKKAVAEVEEMCNILSMEGVTVRRPDPIDWSLKYKTPDFESTGLYSAMPRDILMVVGNEIIEAPMAWRSRFFEYRAYRSIIKDYFHRGAKWTTAPKPTMADELYDQNYPIHSVEDRHKLAAQGKFVTTEFEPCFDAADFIRAGRDIFAQRSQVTNYLGIEWMRRHLAPDYRVHIISFKDPNPMHIDATFNIIGPGLVLSNPDRPCHQIDLFKKAGWTIVTPPTPVIPDDHPLWMSSKWLSMNVLMLDEKRVMVDANEVPIQKMFEKLGISTIKVNIRNANSLGGGFHCWTCDVRRRGTLQSYFD.

The transit peptide at 1–43 (MLRVRCLRGGSRGAEAVHYIGSRLGGSLTGWVQRTFQSTQAAT) directs the protein to the mitochondrion. Residues S46 and S49 each carry the phosphoserine modification. Position 170 (D170) interacts with arginine. Catalysis depends on residues D254 and H303. Residues D305, R322, S354, and S355 each contribute to the arginine site. Position 385 is an N6-acetyllysine (K385). Catalysis depends on C407, which acts as the Amidino-cysteine intermediate.

This sequence belongs to the amidinotransferase family. As to quaternary structure, homodimer. As to expression, expressed in kidney, brain, gonads, uterus, and embryonic head, chest and abdomen. Maternally expressed in the placenta and yolk sac of embryos.

It localises to the mitochondrion inner membrane. The enzyme catalyses L-arginine + glycine = guanidinoacetate + L-ornithine. It carries out the reaction 4-aminobutanoate + L-arginine = 4-guanidinobutanoate + L-ornithine. The catalysed reaction is beta-alanine + L-arginine = 3-guanidinopropanoate + L-ornithine. It catalyses the reaction taurine + L-arginine = taurocyamine + L-ornithine. The protein operates within amine and polyamine biosynthesis; creatine biosynthesis; creatine from L-arginine and glycine: step 1/2. In terms of biological role, transamidinase that catalyzes the transfer of the amidino group of L-arginine onto the amino moiety of acceptor metabolites such as glycine, beta-alanine, gamma-aminobutyric acid (GABA) and taurine yielding the corresponding guanidine derivatives. Catalyzes the rate-limiting step of creatine biosynthesis, namely the transfer of the amidino group from L-arginine to glycine to generate guanidinoacetate, which is then methylated by GAMT to form creatine. Provides creatine as a source for ATP generation in tissues with high energy demands, in particular skeletal muscle, heart and brain. The polypeptide is Glycine amidinotransferase, mitochondrial (Gatm) (Mus musculus (Mouse)).